The sequence spans 206 residues: Large ribosomal subunit protein uL4 (206 aa).

The segment at 44 to 78 (RSGNRAQKDREQVKHTTKKPWRQKGTGRARAGMSS) is disordered. The segment covering 58 to 70 (HTTKKPWRQKGTG) has biased composition (basic residues).

This sequence belongs to the universal ribosomal protein uL4 family. Part of the 50S ribosomal subunit.

Functionally, one of the primary rRNA binding proteins, this protein initially binds near the 5'-end of the 23S rRNA. It is important during the early stages of 50S assembly. It makes multiple contacts with different domains of the 23S rRNA in the assembled 50S subunit and ribosome. In terms of biological role, forms part of the polypeptide exit tunnel. The polypeptide is Large ribosomal subunit protein uL4 (Paraburkholderia phytofirmans (strain DSM 17436 / LMG 22146 / PsJN) (Burkholderia phytofirmans)).